Reading from the N-terminus, the 102-residue chain is MEITDVRLRRVETDGRMKAISSITIDGEFVIHDIRVIDGNEGLFVAMPSKRTPDGEFRDIAHPINSGTRAKIQEAVLAAYEVADEPAVNEESSADESIVEEN.

Belongs to the SpoVG family.

In terms of biological role, could be involved in septation. This is Putative septation protein SpoVG 1 from Listeria monocytogenes serotype 4b (strain F2365).